The sequence spans 158 residues: 2-C-methyl-D-erythritol 2,4-cyclodiphosphate synthase (158 aa).

Asp8 and His10 together coordinate a divalent metal cation. 4-CDP-2-C-methyl-D-erythritol 2-phosphate-binding positions include 8–10 and 34–35; these read DVH and HS. His42 provides a ligand contact to a divalent metal cation. Residues 56–58, 61–65, 100–106, 132–135, Phe139, and Arg142 each bind 4-CDP-2-C-methyl-D-erythritol 2-phosphate; these read DIG, FPDTD, AQRPKMA, and TTEE.

Belongs to the IspF family. Homotrimer. Requires a divalent metal cation as cofactor.

It catalyses the reaction 4-CDP-2-C-methyl-D-erythritol 2-phosphate = 2-C-methyl-D-erythritol 2,4-cyclic diphosphate + CMP. It participates in isoprenoid biosynthesis; isopentenyl diphosphate biosynthesis via DXP pathway; isopentenyl diphosphate from 1-deoxy-D-xylulose 5-phosphate: step 4/6. Its function is as follows. Involved in the biosynthesis of isopentenyl diphosphate (IPP) and dimethylallyl diphosphate (DMAPP), two major building blocks of isoprenoid compounds. Catalyzes the conversion of 4-diphosphocytidyl-2-C-methyl-D-erythritol 2-phosphate (CDP-ME2P) to 2-C-methyl-D-erythritol 2,4-cyclodiphosphate (ME-CPP) with a corresponding release of cytidine 5-monophosphate (CMP). The sequence is that of 2-C-methyl-D-erythritol 2,4-cyclodiphosphate synthase from Pelobacter propionicus (strain DSM 2379 / NBRC 103807 / OttBd1).